The following is a 663-amino-acid chain: UvrABC system protein B (663 aa).

In terms of domain architecture, Helicase ATP-binding spans 31–271 (DNIEGGEKAQ…EASIAKIQAE (241 aa)). 44 to 51 (GATGTGKT) contacts ATP. Positions 97 to 120 (YYDYYQPEAYVPSSDTYIEKDSSV) match the Beta-hairpin motif. The 167-residue stretch at 435 to 601 (QMDDLLGEIN…TIKKEIRDLI (167 aa)) folds into the Helicase C-terminal domain. The 36-residue stretch at 627-662 (QEAIKKLQKQMHEAAELLDFELAAQIRDMVLELKSM) folds into the UVR domain.

This sequence belongs to the UvrB family. As to quaternary structure, forms a heterotetramer with UvrA during the search for lesions. Interacts with UvrC in an incision complex.

The protein resides in the cytoplasm. The UvrABC repair system catalyzes the recognition and processing of DNA lesions. A damage recognition complex composed of 2 UvrA and 2 UvrB subunits scans DNA for abnormalities. Upon binding of the UvrA(2)B(2) complex to a putative damaged site, the DNA wraps around one UvrB monomer. DNA wrap is dependent on ATP binding by UvrB and probably causes local melting of the DNA helix, facilitating insertion of UvrB beta-hairpin between the DNA strands. Then UvrB probes one DNA strand for the presence of a lesion. If a lesion is found the UvrA subunits dissociate and the UvrB-DNA preincision complex is formed. This complex is subsequently bound by UvrC and the second UvrB is released. If no lesion is found, the DNA wraps around the other UvrB subunit that will check the other stand for damage. This chain is UvrABC system protein B, found in Streptococcus uberis (strain ATCC BAA-854 / 0140J).